Reading from the N-terminus, the 348-residue chain is D-alanine--D-alanine ligase (348 aa).

In terms of domain architecture, ATP-grasp spans 132–334 (KRVLESIGIP…YPDLIEELVT (203 aa)). 162–217 (LARLTFPIFVKPANMGSSVGISKAQTKVELRKAIQLALTYDSRVLIEQGVIAREIE) is a binding site for ATP. Asp-288, Glu-301, and Asn-303 together coordinate Mg(2+).

Belongs to the D-alanine--D-alanine ligase family. It depends on Mg(2+) as a cofactor. Mn(2+) serves as cofactor.

It localises to the cytoplasm. The enzyme catalyses 2 D-alanine + ATP = D-alanyl-D-alanine + ADP + phosphate + H(+). Its pathway is cell wall biogenesis; peptidoglycan biosynthesis. Its function is as follows. Cell wall formation. This Streptococcus pyogenes serotype M4 (strain MGAS10750) protein is D-alanine--D-alanine ligase.